Consider the following 59-residue polypeptide: Large ribosomal subunit protein bL32 (59 aa).

Residues 1–59 (MAVQQNKKSPSKRGMHRAHDFLTAPVIAIEPSTGEAHRRHHISPNGFYRGRKVVKGKDE) form a disordered region. The segment covering 49 to 59 (RGRKVVKGKDE) has biased composition (basic residues).

This sequence belongs to the bacterial ribosomal protein bL32 family.

In Laribacter hongkongensis (strain HLHK9), this protein is Large ribosomal subunit protein bL32.